We begin with the raw amino-acid sequence, 443 residues long: 23S rRNA (uracil(1939)-C(5))-methyltransferase RlmD (443 aa).

In terms of domain architecture, TRAM spans 4-66 (QNRFDRTSFQ…RHFDEARVVE (63 aa)). Residues Cys79, Cys85, Cys88, and Cys167 each contribute to the [4Fe-4S] cluster site. S-adenosyl-L-methionine is bound by residues Gln275, Phe304, Asn309, Glu325, Asp352, and Asp373. The active-site Nucleophile is Cys399.

Belongs to the class I-like SAM-binding methyltransferase superfamily. RNA M5U methyltransferase family. RlmD subfamily.

The enzyme catalyses uridine(1939) in 23S rRNA + S-adenosyl-L-methionine = 5-methyluridine(1939) in 23S rRNA + S-adenosyl-L-homocysteine + H(+). In terms of biological role, catalyzes the formation of 5-methyl-uridine at position 1939 (m5U1939) in 23S rRNA. The polypeptide is 23S rRNA (uracil(1939)-C(5))-methyltransferase RlmD (Xylella fastidiosa (strain Temecula1 / ATCC 700964)).